Consider the following 218-residue polypeptide: Cytidylate kinase (218 aa).

ATP is bound at residue glycine 10–threonine 18.

Belongs to the cytidylate kinase family. Type 1 subfamily.

Its subcellular location is the cytoplasm. The enzyme catalyses CMP + ATP = CDP + ADP. It catalyses the reaction dCMP + ATP = dCDP + ADP. The sequence is that of Cytidylate kinase from Fusobacterium nucleatum subsp. nucleatum (strain ATCC 25586 / DSM 15643 / BCRC 10681 / CIP 101130 / JCM 8532 / KCTC 2640 / LMG 13131 / VPI 4355).